We begin with the raw amino-acid sequence, 372 residues long: Homeobox protein Nkx-2.1 (372 aa).

The homeobox DNA-binding region spans 161–220 (RRKRRVLFSQAQVYELERRFKQQKYLSAPEREHLASMIHLTPTQVKIWFQNHRYKMKRQA). Disordered regions lie at residues 219–258 (QAKDKAAQQQLQQDSGGGGGGGGGAGCPQQQQAQQQSPRR), 269–288 (KPCQAGAPAPGAASLQSHAQ), and 312–340 (AGLGAHPGHQPGSAGQSPDLAHHAASPAG). A compositionally biased stretch (gly residues) spans 233 to 244 (SGGGGGGGGGAG). Residues 245–254 (CPQQQQAQQQ) are compositionally biased toward low complexity. Residue Ser-255 is modified to Phosphoserine. Low complexity predominate over residues 273-288 (AGAPAPGAASLQSHAQ).

Belongs to the NK-2 homeobox family. In terms of assembly, interacts with WWTR1. In terms of processing, phosphorylated on serine residues by STK3/MST2. Thyroid, lung and brain.

It localises to the nucleus. Its function is as follows. Transcription factor that binds and activates the promoter of thyroid specific genes such as thyroglobulin, thyroperoxidase, and thyrotropin receptor. Crucial in the maintenance of the thyroid differentiation phenotype. May play a role in lung development and surfactant homeostasis. Forms a regulatory loop with GRHL2 that coordinates lung epithelial cell morphogenesis and differentiation. Activates the transcription of GNRHR and plays a role in enhancing the circadian oscillation of its gene expression. Represses the transcription of the circadian transcriptional repressor NR1D1. This Mus musculus (Mouse) protein is Homeobox protein Nkx-2.1.